The following is a 138-amino-acid chain: Large ribosomal subunit protein uL16 (138 aa).

It belongs to the universal ribosomal protein uL16 family. As to quaternary structure, part of the 50S ribosomal subunit.

Functionally, binds 23S rRNA and is also seen to make contacts with the A and possibly P site tRNAs. This chain is Large ribosomal subunit protein uL16, found in Corynebacterium kroppenstedtii (strain DSM 44385 / JCM 11950 / CIP 105744 / CCUG 35717).